Consider the following 148-residue polypeptide: Myosin light chain 3, skeletal muscle isoform (148 aa).

Position 1 is an N-acetylthreonine (threonine 1). 2 consecutive EF-hand domains span residues 6 to 41 (DQIEDFKEAFGLFDRIGDSQVAFNQVADIMRALGQN) and 82 to 117 (GTYDDYVEGLRVFDKEGNGTVMGAELRIVLSTLGEK).

As to quaternary structure, myosin is a hexamer of 2 heavy chains and 4 light chains.

This is Myosin light chain 3, skeletal muscle isoform from Chelon ramada (Thin-lipped grey mullet).